The sequence spans 284 residues: 4-hydroxy-3-methylbut-2-enyl diphosphate reductase (284 aa).

A [4Fe-4S] cluster-binding site is contributed by cysteine 12. 2 residues coordinate (2E)-4-hydroxy-3-methylbut-2-enyl diphosphate: histidine 40 and histidine 72. Positions 40 and 72 each coordinate dimethylallyl diphosphate. Residues histidine 40 and histidine 72 each coordinate isopentenyl diphosphate. Cysteine 94 lines the [4Fe-4S] cluster pocket. Histidine 122 is a binding site for (2E)-4-hydroxy-3-methylbut-2-enyl diphosphate. Dimethylallyl diphosphate is bound at residue histidine 122. Isopentenyl diphosphate is bound at residue histidine 122. Glutamate 124 serves as the catalytic Proton donor. Position 161 (threonine 161) interacts with (2E)-4-hydroxy-3-methylbut-2-enyl diphosphate. [4Fe-4S] cluster is bound at residue cysteine 193. (2E)-4-hydroxy-3-methylbut-2-enyl diphosphate-binding residues include serine 221, asparagine 223, and serine 264. Dimethylallyl diphosphate-binding residues include serine 221, asparagine 223, and serine 264. The isopentenyl diphosphate site is built by serine 221, asparagine 223, and serine 264.

It belongs to the IspH family. The cofactor is [4Fe-4S] cluster.

The enzyme catalyses isopentenyl diphosphate + 2 oxidized [2Fe-2S]-[ferredoxin] + H2O = (2E)-4-hydroxy-3-methylbut-2-enyl diphosphate + 2 reduced [2Fe-2S]-[ferredoxin] + 2 H(+). It catalyses the reaction dimethylallyl diphosphate + 2 oxidized [2Fe-2S]-[ferredoxin] + H2O = (2E)-4-hydroxy-3-methylbut-2-enyl diphosphate + 2 reduced [2Fe-2S]-[ferredoxin] + 2 H(+). The protein operates within isoprenoid biosynthesis; dimethylallyl diphosphate biosynthesis; dimethylallyl diphosphate from (2E)-4-hydroxy-3-methylbutenyl diphosphate: step 1/1. It functions in the pathway isoprenoid biosynthesis; isopentenyl diphosphate biosynthesis via DXP pathway; isopentenyl diphosphate from 1-deoxy-D-xylulose 5-phosphate: step 6/6. Functionally, catalyzes the conversion of 1-hydroxy-2-methyl-2-(E)-butenyl 4-diphosphate (HMBPP) into a mixture of isopentenyl diphosphate (IPP) and dimethylallyl diphosphate (DMAPP). Acts in the terminal step of the DOXP/MEP pathway for isoprenoid precursor biosynthesis. This chain is 4-hydroxy-3-methylbut-2-enyl diphosphate reductase, found in Dehalococcoides mccartyi (strain ATCC BAA-2100 / JCM 16839 / KCTC 5957 / BAV1).